The sequence spans 458 residues: N-acetylgalactosamine kinase (458 aa).

Alpha-D-galactose is bound by residues arginine 43, glutamate 49, histidine 50, and aspartate 52. Glycine 143, serine 145, and serine 146 together coordinate ATP. Residue aspartate 190 participates in alpha-D-galactose binding. Aspartate 190 acts as the Proton acceptor in catalysis. Positions 233 and 234 each coordinate ATP.

It belongs to the GHMP kinase family. GalK subfamily. As to quaternary structure, monomer.

The enzyme catalyses N-acetyl-alpha-D-galactosamine + ATP = N-acetyl-alpha-D-galactosamine 1-phosphate + ADP + H(+). In terms of biological role, acts on GalNAc. Also acts as a galactokinase when galactose is present at high concentrations. The sequence is that of N-acetylgalactosamine kinase (GALK2) from Pongo abelii (Sumatran orangutan).